The chain runs to 343 residues: Lumican (343 aa).

The N-terminal stretch at 1-18 (MTLNSLPIFLVLISGIFC) is a signal peptide. Position 19 is a pyrrolidone carboxylic acid (Gln19). A sulfotyrosine mark is found at Tyr20 and Tyr22. The 39-residue stretch at 31–69 (DPFGPSTAVCAPECNCPLSYPTAMYCDNLKLKTIPIVPS) folds into the LRRNT domain. LRR repeat units lie at residues 70–91 (GIKY…TFDN), 94–117 (DLQW…VFSK), 120–140 (NLKK…PLPK), 141–162 (TLDD…ALEG), 165–186 (NLTV…GAFK), 190–211 (SLLY…LPHS), 212–232 (LLML…YFQG), and 235–255 (TLQY…PGNV). Asn91 is a glycosylation site (N-linked (GlcNAc...) (keratan sulfate) asparagine). Asn130 carries N-linked (GlcNAc...) (keratan sulfate) asparagine glycosylation. Asn165 is a glycosylation site (N-linked (GlcNAc...) (keratan sulfate) asparagine). An N-linked (GlcNAc...) (keratan sulfate) asparagine glycan is attached at Asn257. LRR repeat units lie at residues 260–281 (SLVE…SENL), 282–301 (ENFY…SFCK), and 310–330 (KITH…PQEM). The cysteines at positions 300 and 333 are disulfide-linked. An N-linked (GlcNAc...) asparagine glycan is attached at Asn320.

This sequence belongs to the small leucine-rich proteoglycan (SLRP) family. SLRP class II subfamily. As to quaternary structure, binds to laminin. In terms of processing, contains keratan sulfate.

It localises to the secreted. It is found in the extracellular space. Its subcellular location is the extracellular matrix. The protein is Lumican (LUM) of Coturnix japonica (Japanese quail).